The primary structure comprises 119 residues: Holo-[acyl-carrier-protein] synthase (119 aa).

D8 and E59 together coordinate Mg(2+).

Belongs to the P-Pant transferase superfamily. AcpS family. Requires Mg(2+) as cofactor.

The protein localises to the cytoplasm. The enzyme catalyses apo-[ACP] + CoA = holo-[ACP] + adenosine 3',5'-bisphosphate + H(+). Its function is as follows. Transfers the 4'-phosphopantetheine moiety from coenzyme A to a Ser of acyl-carrier-protein. The chain is Holo-[acyl-carrier-protein] synthase from Lactococcus lactis subsp. lactis (strain IL1403) (Streptococcus lactis).